The following is a 97-amino-acid chain: Co-chaperonin GroES (97 aa).

Belongs to the GroES chaperonin family. In terms of assembly, heptamer of 7 subunits arranged in a ring. Interacts with the chaperonin GroEL.

Its subcellular location is the cytoplasm. Its function is as follows. Together with the chaperonin GroEL, plays an essential role in assisting protein folding. The GroEL-GroES system forms a nano-cage that allows encapsulation of the non-native substrate proteins and provides a physical environment optimized to promote and accelerate protein folding. GroES binds to the apical surface of the GroEL ring, thereby capping the opening of the GroEL channel. This chain is Co-chaperonin GroES, found in Arthrobacter sp. (strain FB24).